Here is a 68-residue protein sequence, read N- to C-terminus: Agnoprotein (68 aa).

Residues 1-24 are Cytoplasmic-facing; it reads MVLRQLSRQASVKVGKTWTGTKRR. Residues serine 7 and serine 11 each carry the phosphoserine; by host modification. Threonine 21 carries the post-translational modification Phosphothreonine; by host. A helical; Signal-anchor for type II membrane protein membrane pass occupies residues 25-41; it reads AQRIFIFILELLLDFCR. Residues 42 to 68 lie on the Extracellular side of the membrane; it reads GEDSVDGKKKKDSLTDKTETVTEKKES. The disordered stretch occupies residues 44 to 68; sequence DSVDGKKKKDSLTDKTETVTEKKES.

This sequence belongs to the polyomavirus agnoprotein family. In terms of assembly, homooligomer. Interacts with VP1. Interacts with large T antigen; this interaction may impact upon the activity of T-antigen on the control of viral gene transcription and replication. Interacts with small t antigen. Interacts with host CBX5; this interaction induces the dissociation of CBX5 from LBR, resulting in destabilization of the nuclear envelope. In terms of processing, phosphorylated by host PKC. Phosphorylation alters the stability and may also have an impact on the subcellular location.

The protein localises to the host cytoplasm. It is found in the host nucleus membrane. Its subcellular location is the host rough endoplasmic reticulum membrane. The protein resides in the host cell membrane. In terms of biological role, alters the structure of the nuclear envelope by interacting with host CBX5 and disrupting CBX5 association with LBR. Involved in the perinuclear-nuclear localization of the capsid protein VP1 during virion assembly and maturation. Plays an important role in the release of progeny virions from infected cells and in viral propagation, probably by acting as a viral ionic channel in the host plasma membrane. Allows influx of extracellular calcium ions in the host cell. May contribute to viral genome transcription and translation of viral late proteins. The protein is Agnoprotein of Simian virus 12 (strain wt100) (SV-12).